The chain runs to 217 residues: 25 kDa ookinete surface antigen (217 aa).

The N-terminal stretch at 1–16 (MNKLYSLFLFLFIQLS) is a signal peptide. The region spanning 30–59 (CKRGFLIQMSGHLECKCENDLVLVNEETCE) is the EGF-like 1; truncated domain. 3 consecutive EGF-like domains span residues 61–106 (KVLK…NVCI), 106–150 (IPNE…NKCS), and 153–193 (GETK…SICT). 9 disulfides stabilise this stretch: C65-C80, C74-C92, C94-C105, C110-C120, C115-C133, C135-C149, C157-C168, C161-C177, and C179-C192. An N-linked (GlcNAc...) asparagine glycan is attached at N112. N-linked (GlcNAc...) asparagine glycosylation is found at N165 and N187. S196 is lipidated: GPI-anchor amidated serine. A propeptide spans 197–217 (AYNILNLSIMFILFSVCFFIM) (removed in mature form). N-linked (GlcNAc...) asparagine glycosylation is present at N202.

The protein resides in the cell membrane. This Plasmodium falciparum (isolate NF54) protein is 25 kDa ookinete surface antigen.